The primary structure comprises 92 residues: Small ribosomal subunit protein uS19c (92 aa).

Belongs to the universal ribosomal protein uS19 family.

The protein resides in the plastid. Its subcellular location is the chloroplast. Protein S19 forms a complex with S13 that binds strongly to the 16S ribosomal RNA. The polypeptide is Small ribosomal subunit protein uS19c (Liriodendron tulipifera (Tuliptree)).